Here is a 471-residue protein sequence, read N- to C-terminus: MLTERVSKYIKKQGLVSAGDEILLAVSGGPDSVCMLYIMHKLSREMGFSLRLAHLNHGLRAEESDRDAAYVTELASALGLPLCQQKVSVKAYQAEHHLSLEEAAREMRYAFLCRTAAEFGSAAVAVGHTLDDNIETVMLHLVRGSGTRGLQGLRPVLNRTIAGAGCLRVIRPLLCLGRAETQVYCREAGLLPRQDITNLSTEPLRNRIRLEVLPLLKTINPAFEETILRTAFIAGEEMALLDEVTSQMKAELVIRQDDVLMIEKIEMQRLHPALKRNLLRQMMEELLGGLKDIEARHIENIVQTMDKPAGRRIDLPYKLVFQVDYEHYLLGWGIDELCPYPPCQGEYRLGVGTETFLDGWVVKTEILPSPIGLDLSESSLVAYLDMDKAGTDLIVRTRAEGDQFQPLGMEDAKSLKEFMIDNKIPRNWRARVPLLISSKEILWLVGYRIGESAKVDENTRRVLRVEFRLLG.

27-32 (SGGPDS) is a binding site for ATP.

This sequence belongs to the tRNA(Ile)-lysidine synthase family.

Its subcellular location is the cytoplasm. It carries out the reaction cytidine(34) in tRNA(Ile2) + L-lysine + ATP = lysidine(34) in tRNA(Ile2) + AMP + diphosphate + H(+). In terms of biological role, ligates lysine onto the cytidine present at position 34 of the AUA codon-specific tRNA(Ile) that contains the anticodon CAU, in an ATP-dependent manner. Cytidine is converted to lysidine, thus changing the amino acid specificity of the tRNA from methionine to isoleucine. This chain is tRNA(Ile)-lysidine synthase, found in Dehalococcoides mccartyi (strain CBDB1).